Consider the following 299-residue polypeptide: Coenzyme PQQ synthesis protein B (299 aa).

The protein belongs to the PqqB family.

It participates in cofactor biosynthesis; pyrroloquinoline quinone biosynthesis. May be involved in the transport of PQQ or its precursor to the periplasm. In Xanthomonas oryzae pv. oryzae (strain MAFF 311018), this protein is Coenzyme PQQ synthesis protein B.